The chain runs to 405 residues: S-adenosylmethionine synthase (405 aa).

141–146 (GQGSVD) provides a ligand contact to ATP.

The protein belongs to the AdoMet synthase 2 family. The cofactor is Mg(2+).

It catalyses the reaction L-methionine + ATP + H2O = S-adenosyl-L-methionine + phosphate + diphosphate. The protein operates within amino-acid biosynthesis; S-adenosyl-L-methionine biosynthesis; S-adenosyl-L-methionine from L-methionine: step 1/1. Functionally, catalyzes the formation of S-adenosylmethionine from methionine and ATP. This is S-adenosylmethionine synthase from Methanococcus maripaludis (strain C5 / ATCC BAA-1333).